A 291-amino-acid chain; its full sequence is Undecaprenyl-diphosphatase (291 aa).

Transmembrane regions (helical) follow at residues 1–21 (MFII…LTEF), 48–68 (SAFT…AWVF), 102–122 (LHVL…DDFI), 126–146 (LFSV…MIIA), 162–182 (ISYF…WPGF), 203–223 (SDFT…LSLL), 231–251 (IADI…GLIA), and 267–287 (FAIY…GFGI).

Belongs to the UppP family.

It is found in the cell membrane. It catalyses the reaction di-trans,octa-cis-undecaprenyl diphosphate + H2O = di-trans,octa-cis-undecaprenyl phosphate + phosphate + H(+). Functionally, catalyzes the dephosphorylation of undecaprenyl diphosphate (UPP). Confers resistance to bacitracin. This chain is Undecaprenyl-diphosphatase, found in Staphylococcus aureus (strain MRSA252).